The chain runs to 456 residues: Tyrosine phenol-lyase (456 aa).

The residue at position 257 (lysine 257) is an N6-(pyridoxal phosphate)lysine.

The protein belongs to the beta-eliminating lyase family. As to quaternary structure, homotetramer. Pyridoxal 5'-phosphate is required as a cofactor.

It carries out the reaction L-tyrosine + H2O = phenol + pyruvate + NH4(+). In Citrobacter freundii, this protein is Tyrosine phenol-lyase (tpl).